Reading from the N-terminus, the 95-residue chain is Putative pterin-4-alpha-carbinolamine dehydratase (95 aa).

Belongs to the pterin-4-alpha-carbinolamine dehydratase family.

It carries out the reaction (4aS,6R)-4a-hydroxy-L-erythro-5,6,7,8-tetrahydrobiopterin = (6R)-L-erythro-6,7-dihydrobiopterin + H2O. This Nocardia farcinica (strain IFM 10152) protein is Putative pterin-4-alpha-carbinolamine dehydratase.